We begin with the raw amino-acid sequence, 209 residues long: Translation initiation factor 2 subunit beta (209 aa).

One can recognise a TRAM domain in the interval 144-202 (TIEEGKEYVVEITEVGSSGEGRTNYKGYTIFVPGAKRGETVKVRIKKVKNDVAIGEIIE).

This sequence belongs to the eIF-2-beta/eIF-5 family. In terms of assembly, heterotrimer composed of an alpha, a beta and a gamma chain.

In terms of biological role, eIF-2 functions in the early steps of protein synthesis by forming a ternary complex with GTP and initiator tRNA. The sequence is that of Translation initiation factor 2 subunit beta (eif2b) from Thermoplasma acidophilum (strain ATCC 25905 / DSM 1728 / JCM 9062 / NBRC 15155 / AMRC-C165).